A 493-amino-acid polypeptide reads, in one-letter code: MQEIMYLAPELVLVATGLVILLTGVFLSPQSKNILGYLATLGTLAAIFLTVKSFGLLTMEGFSVQYTIFSETLSIDALSQFFKLVFLAVALIVSIASIKYTENSDHTEEFYTLVLFATFGMMIVASANDLILLFCAFELASLATFALAGFEKQNARSLEGAMKYFVIGSVSAALMLFGLSFVYGATGTTSIPLIAQNPGLLTGNPIGIVAIVLLTAGFGFKMALVPFHMWAPDTYQGSPSVVSALLAAGSKKMGFVAAFRVFIIALAALQPDWQFMFTLLAVVTMTFGNVVAVAQTSVKRMLAYSSLAQAGYIAMAFAVMTPVALAGGIMYTLAHAFMKAGAFIAAAAVVWMITSEKTGNLDIPDHLDSFRGLGKRMPLAALCMTVFVFALAGIPPTAGFMAKFVLFSSTIQAGMTWLAVIAILNSALSLFYYARLVKYMYFMPPEGKTEKVSIPFPYAAALLVAVAGVLVMGLWPEPFVELAMKAAMVLVPF.

A run of 14 helical transmembrane segments spans residues 7 to 27 (LAPE…GVFL), 34 to 54 (ILGY…VKSF), 78 to 98 (LSQF…IASI), 107 to 127 (TEEF…VASA), 130 to 150 (LILL…LAGF), 165 to 185 (FVIG…VYGA), 205 to 225 (PIGI…MALV), 244 to 264 (ALLA…VFII), 273 to 293 (WQFM…VVAV), 310 to 330 (AGYI…GGIM), 333 to 353 (LAHA…VWMI), 381 to 401 (ALCM…AGFM), 404 to 424 (FVLF…IAIL), and 454 to 474 (IPFP…VMGL).

Belongs to the complex I subunit 2 family. As to quaternary structure, the FPO complex is composed of at least 13 different subunits. FpoA, FpoH, FpoJ, FpoK, FpoL, FpoM and FpoN proteins constitute the membrane sector of the complex.

Its subcellular location is the cell membrane. It catalyses the reaction methanophenazine + reduced coenzyme F420-(gamma-L-Glu)(n) = dihydromethanophenazine + oxidized coenzyme F420-(gamma-L-Glu)(n) + H(+). In terms of biological role, component of the F(420)H(2) dehydrogenase (FPO complex) which is part of the energy-conserving F(420)H(2):heterodisulfide oxidoreductase system. The membrane-bound electron transfer system of the complex plays an important role in the metabolism of methylotrophic methanogens when the organisms grow on methanol or methylamines. Catalyzes the oxidation of methanophenazine to dihydromethanophenazine. It shuttles electrons from F(420)H(2), via FAD and iron-sulfur (Fe-S) centers, to methanophenazine (an electron carrier in the membrane). It couples the redox reaction to proton translocation (for every two electrons transferred, two hydrogen ions are translocated across the cytoplasmic membrane), and thus conserves the redox energy in a proton gradient. It also catalyzes the oxidation of F(420)H(2) with quinones such as 2,3-dimethyl-1,4-naphthoquinone, 2-methyl-1,4-naphthoquinone and tetramethyl-p-benzoquinone. The protein is F(420)H(2) dehydrogenase subunit N (fpoN) of Methanosarcina mazei (strain ATCC BAA-159 / DSM 3647 / Goe1 / Go1 / JCM 11833 / OCM 88) (Methanosarcina frisia).